A 424-amino-acid chain; its full sequence is GTPase Obg (424 aa).

Positions 1–158 (MFIDTAKIFV…RWIKLELKLL (158 aa)) constitute an Obg domain. Positions 159 to 331 (ADVGLIGFPN…LMKEAARLLS (173 aa)) constitute an OBG-type G domain. GTP contacts are provided by residues 165 to 172 (GFPNVGKS), 190 to 194 (FTTLK), 212 to 215 (DIPG), 282 to 285 (NKSD), and 312 to 314 (SAA). Mg(2+) is bound by residues Ser172 and Thr192. Residues 345–424 (RFIEEEKRFT…LNDFEFDFLL (80 aa)) form the OCT domain.

The protein belongs to the TRAFAC class OBG-HflX-like GTPase superfamily. OBG GTPase family. Monomer. Requires Mg(2+) as cofactor.

The protein resides in the cytoplasm. An essential GTPase which binds GTP, GDP and possibly (p)ppGpp with moderate affinity, with high nucleotide exchange rates and a fairly low GTP hydrolysis rate. Plays a role in control of the cell cycle, stress response, ribosome biogenesis and in those bacteria that undergo differentiation, in morphogenesis control. The polypeptide is GTPase Obg (Clostridium botulinum (strain Langeland / NCTC 10281 / Type F)).